A 45-amino-acid polypeptide reads, in one-letter code: Large ribosomal subunit protein bL34 (45 aa).

It belongs to the bacterial ribosomal protein bL34 family.

The polypeptide is Large ribosomal subunit protein bL34 (Acidothermus cellulolyticus (strain ATCC 43068 / DSM 8971 / 11B)).